Here is a 382-residue protein sequence, read N- to C-terminus: Carboxynorspermidine/carboxyspermidine decarboxylase (382 aa).

Residue lysine 41 is modified to N6-(pyridoxal phosphate)lysine. Positions 236 and 272 each coordinate substrate.

Belongs to the Orn/Lys/Arg decarboxylase class-II family. NspC subfamily. In terms of assembly, homodimer. It depends on pyridoxal 5'-phosphate as a cofactor.

It is found in the cytoplasm. The enzyme catalyses carboxynorspermidine + H(+) = norspermidine + CO2. The catalysed reaction is carboxyspermidine + H(+) = spermidine + CO2. Functionally, catalyzes the decarboxylation of carboxynorspermidine and carboxyspermidine in vitro. In vivo, responsible for synthesizing spermidine, but not sym-norspermidine. This Campylobacter jejuni subsp. jejuni serotype O:6 (strain 81116 / NCTC 11828) protein is Carboxynorspermidine/carboxyspermidine decarboxylase.